We begin with the raw amino-acid sequence, 166 residues long: Thiamine precursor transporter HmpT (166 aa).

Transmembrane regions (helical) follow at residues 14 to 34 (LLAI…FPIP), 35 to 55 (GSAG…VFLF), 62 to 82 (IIGG…NYMF), 105 to 125 (FLLS…LMYG), and 126 to 146 (WGSA…GFVL).

As to quaternary structure, in E.coli forms a stable energy-coupling factor (ECF) transporter complex composed of 2 membrane-embedded substrate-binding protein (S component), 2 ATP-binding proteins (A and A' components) and 2 transmembrane proteins (T component), probably with a stoichiometry of 2:1:1:2. May be able to interact with more than 1 S component at a time.

Its subcellular location is the cell membrane. In terms of biological role, probably a thiamine precursor-binding protein that interacts with the energy-coupling factor (ECF) ABC-transporter complex. Unlike classic ABC transporters this ECF transporter provides the energy necessary to transport a number of different substrates. The substrates themselves are bound by transmembrane, not extracytoplasmic soluble proteins. The protein is Thiamine precursor transporter HmpT (hmpT) of Lactococcus lactis subsp. cremoris (strain MG1363).